Reading from the N-terminus, the 371-residue chain is MTPEQKAKLEANRKLAIERLRKRGILSSDQLNRIESRNEPLKTRPLAVTSGSNRDDNAAAAVHVPNHNGQPSALANTNTNTTSLYGSGVVDGSKRDASVLDKRPTDRIRPSIRKQDYIEYDFATMQNLNGGYINPKDKLPNSDFTDDQEFESEFGSKKQKTLQDWKKEQLERKMLYENAPPPEHISKAPKCIECHINIEMDPVLHDVFKLQVCKQCSKEHPEKYALLTKTECKEDYFLTDPELNDEDLFHRLEKPNPHSGTFARMQLFVRCEVEAFAFKKWGGEEGLDEEWQRREEGKAHRREKKYEKKIKEMRLKTRAQEYTNRLREKKHGKAHIHHFSDPVDGGIDEDGYQIQRRRCTDCGLETEEIDI.

Residues 26-48 are disordered; it reads LSSDQLNRIESRNEPLKTRPLAV. Residues 32 to 42 are compositionally biased toward basic and acidic residues; the sequence is NRIESRNEPLK. Zn(2+)-binding residues include cysteine 191, cysteine 194, cysteine 213, and cysteine 216. The segment at 191-216 is a zinc-finger region; it reads CIECHINIEMDPVLHDVFKLQVCKQC.

It belongs to the XPA family. As to quaternary structure, two monomers bind to kinked/damaged DNA (construct with only the C-terminal DNA-binding domain). Component of the nucleotide excision repair factor 1 (NEF1) complex consisting of RAD1, RAD10 and RAD14.

It localises to the nucleus. In terms of biological role, involved in nucleotide excision repair. Binds specifically to damaged DNA. Required for the incision step. The chain is DNA repair protein RAD14 (RAD14) from Saccharomyces cerevisiae (strain ATCC 204508 / S288c) (Baker's yeast).